We begin with the raw amino-acid sequence, 262 residues long: 4-hydroxy-2-oxo-heptane-1,7-dioate aldolase (262 aa).

H45 functions as the Proton acceptor in the catalytic mechanism. Residue Q147 coordinates substrate. An a divalent metal cation-binding site is contributed by E149. 2 residues coordinate substrate: A174 and D175. D175 provides a ligand contact to a divalent metal cation.

This sequence belongs to the HpcH/HpaI aldolase family. As to quaternary structure, homohexamer; trimer of dimers. A divalent metal cation serves as cofactor.

It catalyses the reaction 4-hydroxy-2-oxoheptanedioate = succinate semialdehyde + pyruvate. It carries out the reaction D-glyceraldehyde + 3-hydroxypyruvate = (3R,4S,5R)-3,4,5,6-tetrahydroxy-2-oxohexanoate. The catalysed reaction is D-glyceraldehyde + 3-hydroxypyruvate = 2-dehydro-D-gluconate. The enzyme catalyses D-glyceraldehyde + 3-hydroxypyruvate = 2-dehydro-D-galactonate. It catalyses the reaction D-glyceraldehyde + pyruvate = 2-dehydro-3-deoxy-L-galactonate. It carries out the reaction 2-dehydro-3-deoxy-D-gluconate = D-glyceraldehyde + pyruvate. The protein operates within aromatic compound metabolism; 4-hydroxyphenylacetate degradation; pyruvate and succinate semialdehyde from 4-hydroxyphenylacetate: step 7/7. In terms of biological role, catalyzes the reversible retro-aldol cleavage of 4-hydroxy-2-ketoheptane-1,7-dioate (HKHD) to pyruvate and succinic semialdehyde. In vitro, can catalyze the aldolisation reaction between hydroxypyruvate (HPA) or pyruvate (PA) and D-glyceraldehyde (D-GA). The condensation of hydroxypyruvate and D-glyceraldehyde produces (3R,4S,5R)-3,4,5,6-tetrahydroxy-2-oxohexanoate as the major product, 2-dehydro-D-gluconate and 2-dehydro-D-galactonate. The condensation of pyruvate and D-glyceraldehyde produces 2-dehydro-3-deoxy-L-galactonate as the major product and 2-dehydro-3-deoxy-D-gluconate. The protein is 4-hydroxy-2-oxo-heptane-1,7-dioate aldolase of Escherichia coli (strain ATCC 8739 / DSM 1576 / NBRC 3972 / NCIMB 8545 / WDCM 00012 / Crooks).